The chain runs to 175 residues: Protein-export protein SecB (175 aa).

Belongs to the SecB family. In terms of assembly, homotetramer, a dimer of dimers. One homotetramer interacts with 1 SecA dimer.

It is found in the cytoplasm. Its function is as follows. One of the proteins required for the normal export of preproteins out of the cell cytoplasm. It is a molecular chaperone that binds to a subset of precursor proteins, maintaining them in a translocation-competent state. It also specifically binds to its receptor SecA. The protein is Protein-export protein SecB of Anaplasma marginale (strain Florida).